The following is a 299-amino-acid chain: Protein bem46 (299 aa).

The helical transmembrane segment at 15-32 (YSGMASLAVTLIALGFLY) threads the bilayer.

This sequence belongs to the serine esterase family.

Its subcellular location is the membrane. Its function is as follows. Suppressor of bem1/bud5. The polypeptide is Protein bem46 (bem46) (Schizosaccharomyces pombe (strain 972 / ATCC 24843) (Fission yeast)).